We begin with the raw amino-acid sequence, 419 residues long: Tyrosine--tRNA ligase 2 (419 aa).

L-tyrosine is bound at residue tyrosine 34. The short motif at 39 to 48 is the 'HIGH' region element; sequence PTGDSMHIGH. 2 residues coordinate L-tyrosine: tyrosine 168 and glutamine 172. Positions 230–234 match the 'KMSKS' region motif; the sequence is KFGKS. Lysine 233 lines the ATP pocket. The region spanning 352 to 418 is the S4 RNA-binding domain; it reads KNIVEWLVDL…GKKNYSLVKL (67 aa).

It belongs to the class-I aminoacyl-tRNA synthetase family. TyrS type 1 subfamily. Homodimer.

It localises to the cytoplasm. The enzyme catalyses tRNA(Tyr) + L-tyrosine + ATP = L-tyrosyl-tRNA(Tyr) + AMP + diphosphate + H(+). In terms of biological role, catalyzes the attachment of tyrosine to tRNA(Tyr) in a two-step reaction: tyrosine is first activated by ATP to form Tyr-AMP and then transferred to the acceptor end of tRNA(Tyr). This is Tyrosine--tRNA ligase 2 from Bacillus cereus (strain ZK / E33L).